Here is a 72-residue protein sequence, read N- to C-terminus: Translation initiation factor IF-1 (72 aa).

The S1-like domain maps to 1–72 (MAKEDAIELQ…SKGRIVFRAR (72 aa)).

This sequence belongs to the IF-1 family. In terms of assembly, component of the 30S ribosomal translation pre-initiation complex which assembles on the 30S ribosome in the order IF-2 and IF-3, IF-1 and N-formylmethionyl-tRNA(fMet); mRNA recruitment can occur at any time during PIC assembly.

It localises to the cytoplasm. Functionally, one of the essential components for the initiation of protein synthesis. Stabilizes the binding of IF-2 and IF-3 on the 30S subunit to which N-formylmethionyl-tRNA(fMet) subsequently binds. Helps modulate mRNA selection, yielding the 30S pre-initiation complex (PIC). Upon addition of the 50S ribosomal subunit IF-1, IF-2 and IF-3 are released leaving the mature 70S translation initiation complex. In Aliivibrio fischeri (strain ATCC 700601 / ES114) (Vibrio fischeri), this protein is Translation initiation factor IF-1.